We begin with the raw amino-acid sequence, 398 residues long: Thyrotropin-releasing hormone receptor (398 aa).

Residues 1 to 28 (MENETGSELNQTQLQPRAVVALEYQVVT) are Extracellular-facing. 2 N-linked (GlcNAc...) asparagine glycosylation sites follow: N3 and N10. A helical transmembrane segment spans residues 29–51 (ILLVLIICGLGIVGNIMVVLVVM). Residues 52–61 (RTKHMRTPTN) are Cytoplasmic-facing. The chain crosses the membrane as a helical span at residues 62 to 83 (CYLVSLAVADLMVLVAAGLPNI). The Extracellular portion of the chain corresponds to 84–99 (TDSIYGSWVYGYVGCL). Residues C98 and C179 are joined by a disulfide bond. Residues 100–121 (CITYLQYLGINASSCSITAFTI) form a helical membrane-spanning segment. Residues 122–144 (ERYIAICHPIKAQFLCTFSRAKK) are Cytoplasmic-facing. Residues 145–168 (IIIFVWAFTSIYCMLWFFLLDLNI) traverse the membrane as a helical segment. Topologically, residues 169–193 (STYKDAIVVSCGYKISRNYYSPIYL) are extracellular. A helical transmembrane segment spans residues 194–215 (MDFGVFYVVPMILATVLYGFIA). Residues 216-266 (RILFLSPIPSDPKENSNTWKNDSTHQNKNLNSKTSNRYFNSTVSSRKQVTK) are Cytoplasmic-facing. Residues 267-288 (MLAVVVILFALLWMPYRTLVVV) form a helical membrane-spanning segment. Residues 289-296 (NSFLSSPF) lie on the Extracellular side of the membrane. The chain crosses the membrane as a helical span at residues 297–319 (QENWFLLFCRICIYLNSAINPVI). Topologically, residues 320–398 (YNLMSQKFRA…LASEVTFSQS (79 aa)) are cytoplasmic.

The protein belongs to the G-protein coupled receptor 1 family.

It is found in the cell membrane. Receptor for thyrotropin-releasing hormone (TRH). Upon ligand binding, this G-protein-coupled receptor triggers activation of the phosphatidylinositol (IP3)-calcium-protein kinase C (PKC) pathway. The sequence is that of Thyrotropin-releasing hormone receptor (TRHR) from Ovis aries (Sheep).